A 264-amino-acid polypeptide reads, in one-letter code: COP9 signalosome complex subunit 7b (264 aa).

Alanine 2 is subject to N-acetylalanine. Residues 2-159 (AGEQKPSSNL…QLLEVDFCIG (158 aa)) form the PCI domain. A coiled-coil region spans residues 194–237 (RANQYKENHSRTQQQVEAEVTNIKKTLKATASSSAQEMEQQLAE). Over residues 223–232 (TASSSAQEME) the composition is skewed to polar residues. The segment at 223–264 (TASSSAQEMEQQLAERECPPHAEQRQPTKKMSKVKGLVSSRH) is disordered. The span at 235-248 (LAERECPPHAEQRQ) shows a compositional bias: basic and acidic residues.

Belongs to the CSN7/EIF3M family. CSN7 subfamily. In terms of assembly, component of the CSN complex, composed of COPS1/GPS1, COPS2, COPS3, COPS4, COPS5, COPS6, COPS7 (COPS7A or COPS7B), COPS8 and COPS9. In the complex, it probably interacts directly with COPS1, COPS2, COPS4, COPS5, COPS6 and COPS8. Interacts with EIF3S6.

It is found in the cytoplasm. The protein localises to the nucleus. Component of the COP9 signalosome complex (CSN), a complex involved in various cellular and developmental processes. The CSN complex is an essential regulator of the ubiquitin (Ubl) conjugation pathway by mediating the deneddylation of the cullin subunits of SCF-type E3 ligase complexes, leading to decrease the Ubl ligase activity of SCF-type complexes such as SCF, CSA or DDB2. The complex is also involved in phosphorylation of p53/TP53, JUN, I-kappa-B-alpha/NFKBIA, ITPK1 and IRF8/ICSBP, possibly via its association with CK2 and PKD kinases. CSN-dependent phosphorylation of TP53 and JUN promotes and protects degradation by the Ubl system, respectively. The sequence is that of COP9 signalosome complex subunit 7b (COPS7B) from Bos taurus (Bovine).